A 168-amino-acid chain; its full sequence is Group IIF secretory phospholipase A2 (168 aa).

Positions 1–20 are cleaved as a signal peptide; sequence MKKFFTVAILAGSVLSTAHG. Disulfide bonds link Cys-46–Cys-138, Cys-48–Cys-64, Cys-63–Cys-120, Cys-69–Cys-145, Cys-70–Cys-113, Cys-79–Cys-106, and Cys-98–Cys-111. Ca(2+) contacts are provided by Tyr-47, Gly-49, and Gly-51. Residue His-67 is part of the active site. Asp-68 contacts Ca(2+). N-linked (GlcNAc...) asparagine glycosylation is found at Asn-92 and Asn-102. Asp-114 is an active-site residue. Asn-123 and Asn-144 each carry an N-linked (GlcNAc...) asparagine glycan. The segment at 139-168 is required for localization on the plasma membrane; the sequence is QGPTPNCSIYEPPPEEVTCSHQSPAPPAPP.

The protein belongs to the phospholipase A2 family. Requires Ca(2+) as cofactor. Expressed at high levels in placenta, testis, thymus and at lower levels in heart, kidney, liver and prostate. Highly expressed in rheumatoid arthritic tissues, including synovial lining cells in the intima, capillary endothelial cells and plasma cells.

It is found in the secreted. Its subcellular location is the cell membrane. The catalysed reaction is a 1,2-diacyl-sn-glycero-3-phosphocholine + H2O = a 1-acyl-sn-glycero-3-phosphocholine + a fatty acid + H(+). The enzyme catalyses 1-hexadecanoyl-2-(9Z-octadecenoyl)-sn-glycero-3-phospho-(1'-sn-glycerol) + H2O = 1-hexadecanoyl-sn-glycero-3-phospho-(1'-sn-glycerol) + (9Z)-octadecenoate + H(+). It catalyses the reaction 1-hexadecanoyl-2-(9Z,12Z-octadecadienoyl)-sn-glycero-3-phosphoethanolamine + H2O = 1-hexadecanoyl-sn-glycero-3-phosphoethanolamine + (9Z,12Z)-octadecadienoate + H(+). It carries out the reaction 1-hexadecanoyl-2-(5Z,8Z,11Z,14Z-eicosatetraenoyl)-sn-glycero-3-phosphoethanolamine + H2O = 1-hexadecanoyl-sn-glycero-3-phosphoethanolamine + (5Z,8Z,11Z,14Z)-eicosatetraenoate + H(+). The catalysed reaction is 1-hexadecanoyl-2-(9Z-octadecenoyl)-sn-glycero-3-phosphocholine + H2O = 1-hexadecanoyl-sn-glycero-3-phosphocholine + (9Z)-octadecenoate + H(+). The enzyme catalyses 1-hexadecanoyl-2-(9Z-octadecenoyl)-sn-glycero-3-phospho-L-serine + H2O = 1-hexadecanoyl-sn-glycero-3-phospho-L-serine + (9Z)-octadecenoate + H(+). Functionally, secretory calcium-dependent phospholipase A2 that primarily targets extracellular phospholipids. Hydrolyzes the ester bond of the fatty acyl group attached at the sn-2 position of phospholipids (phospholipase A2 activity), the catalytic efficiency decreasing in the following order: phosphatidylglycerols &gt; phosphatidylethanolamines &gt; phosphatidylcholines &gt; phosphatidylserines. May play a role in lipid mediator production in inflammatory conditions, by providing arachidonic acid to downstream cyclooxygenases and lipoxygenases. This Homo sapiens (Human) protein is Group IIF secretory phospholipase A2 (PLA2G2F).